A 121-amino-acid polypeptide reads, in one-letter code: Large ribosomal subunit protein bL19 (121 aa).

It belongs to the bacterial ribosomal protein bL19 family.

Its function is as follows. This protein is located at the 30S-50S ribosomal subunit interface and may play a role in the structure and function of the aminoacyl-tRNA binding site. The protein is Large ribosomal subunit protein bL19 of Chlamydia trachomatis serovar L2 (strain ATCC VR-902B / DSM 19102 / 434/Bu).